Consider the following 117-residue polypeptide: Large ribosomal subunit protein bL19 (117 aa).

It belongs to the bacterial ribosomal protein bL19 family.

In terms of biological role, this protein is located at the 30S-50S ribosomal subunit interface and may play a role in the structure and function of the aminoacyl-tRNA binding site. This chain is Large ribosomal subunit protein bL19, found in Shewanella denitrificans (strain OS217 / ATCC BAA-1090 / DSM 15013).